Consider the following 250-residue polypeptide: uncharacterized protein (250 aa).

The 238-residue stretch at 7–244 (LKVEDLHVYR…YKKECGKCYK (238 aa)) folds into the ABC transporter domain. Position 39-46 (39-46 (GPNGAGKS)) interacts with ATP.

Belongs to the ABC transporter superfamily.

This is an uncharacterized protein from Methanocaldococcus jannaschii (strain ATCC 43067 / DSM 2661 / JAL-1 / JCM 10045 / NBRC 100440) (Methanococcus jannaschii).